Reading from the N-terminus, the 494-residue chain is Glycerol kinase (494 aa).

Threonine 13 contacts ADP. ATP-binding residues include threonine 13, threonine 14, and serine 15. Threonine 13 serves as a coordination point for sn-glycerol 3-phosphate. ADP is bound at residue arginine 17. Arginine 83, glutamate 84, tyrosine 135, and aspartate 244 together coordinate sn-glycerol 3-phosphate. Residues arginine 83, glutamate 84, tyrosine 135, aspartate 244, and glutamine 245 each contribute to the glycerol site. Positions 266 and 309 each coordinate ADP. ATP contacts are provided by threonine 266, glycine 309, glutamine 313, and glycine 410. ADP-binding residues include glycine 410 and asparagine 414.

It belongs to the FGGY kinase family.

The enzyme catalyses glycerol + ATP = sn-glycerol 3-phosphate + ADP + H(+). Its pathway is polyol metabolism; glycerol degradation via glycerol kinase pathway; sn-glycerol 3-phosphate from glycerol: step 1/1. Inhibited by fructose 1,6-bisphosphate (FBP). Functionally, key enzyme in the regulation of glycerol uptake and metabolism. Catalyzes the phosphorylation of glycerol to yield sn-glycerol 3-phosphate. This Shewanella baltica (strain OS195) protein is Glycerol kinase.